The chain runs to 371 residues: MAISKITLAIIVLLLGFTEKLSALSSSCNFPAVFNFGDSNSDTGAISAAIGEVPPPNGVAFFGRSAGRHSDGRLIIDFITENLTLPYLTPYLDSVGANYRHGANFATGGSCIRPTLACFSPFHLGTQVSQFIHFKTRTLSLYNQTNGKFNRLSHTNYFSKALYTLDIGQNDLAIGFQNMTEEQLKATIPLIIENFTIALKLLYKEGARFFSIHNTGPTGCLPYLLKAFPAIPRDPYGCLKPLNNVAIEFNKQLKNKITQLKKELPSSFFTYVDVYSAKYNLITKAKALGFIDPFDYCCVGAIGRGMGCGKTIFLNGTELYSSSCQNRKNFISWDGIHYTETANMLVANRILDGSISDPPLPTQKACKLTKK.

An N-terminal signal peptide occupies residues 1-23 (MAISKITLAIIVLLLGFTEKLSA). Catalysis depends on Ser-39, which acts as the Nucleophile. N-linked (GlcNAc...) asparagine glycans are attached at residues Asn-82, Asn-143, Asn-178, Asn-194, and Asn-315. Catalysis depends on residues Asp-334 and His-337.

The protein belongs to the 'GDSL' lipolytic enzyme family.

Its subcellular location is the secreted. The protein is GDSL esterase/lipase At3g27950 of Arabidopsis thaliana (Mouse-ear cress).